The following is a 515-amino-acid chain: Maturase K (515 aa).

This sequence belongs to the intron maturase 2 family. MatK subfamily.

The protein localises to the plastid. It localises to the chloroplast. Usually encoded in the trnK tRNA gene intron. Probably assists in splicing its own and other chloroplast group II introns. The polypeptide is Maturase K (Pinus tabuliformis (Chinese red pine)).